Here is a 158-residue protein sequence, read N- to C-terminus: N-alpha-acetyltransferase RimI (158 aa).

Positions 8 to 155 constitute an N-acetyltransferase domain; sequence VTIGALTRAD…DAYTMRRDSG (148 aa).

The protein belongs to the acetyltransferase family. RimI subfamily. Monomer. Interacts with TsaD. Interacts with GroS/GroES.

The catalysed reaction is N-terminal L-methionyl-L-alanyl-[protein] + acetyl-CoA = N-terminal N(alpha)-acetyl-L-methionyl-L-alanyl-[protein] + CoA + H(+). The enzyme catalyses N-terminal L-methionyl-L-seryl-[protein] + acetyl-CoA = N-terminal N(alpha)-acetyl-L-methionyl-L-seryl-[protein] + CoA + H(+). It carries out the reaction N-terminal L-methionyl-L-valyl-[protein] + acetyl-CoA = N-terminal N(alpha)-acetyl-L-methionyl-L-valyl-[protein] + CoA + H(+). It catalyses the reaction N-terminal L-methionyl-L-threonyl-[protein] + acetyl-CoA = N-terminal N(alpha)-acetyl-L-methionyl-L-threonyl-[protein] + CoA + H(+). The catalysed reaction is N-terminal L-methionyl-L-lysyl-[protein] + acetyl-CoA = N-terminal N(alpha)-acetyl-L-methionyl-L-lysyl-[protein] + CoA + H(+). The enzyme catalyses N-terminal L-methionyl-L-leucyl-[protein] + acetyl-CoA = N-terminal N(alpha)-acetyl-L-methionyl-L-leucyl-[protein] + CoA + H(+). It carries out the reaction N-terminal L-methionyl-L-phenylalanyl-[protein] + acetyl-CoA = N-terminal N(alpha)-acetyl-L-methionyl-L-phenylalanyl-[protein] + CoA + H(+). It catalyses the reaction N-terminal L-methionyl-L-tyrosyl-[protein] + acetyl-CoA = N-terminal N(alpha)-acetyl-L-methionyl-L-tyrosyl-[protein] + CoA + H(+). The catalysed reaction is N-terminal glycyl-[protein] + acetyl-CoA = N-terminal N(alpha)-acetylglycyl-[protein] + CoA + H(+). The enzyme catalyses N-terminal L-alanyl-[protein] + acetyl-CoA = N-terminal N(alpha)-acetyl-L-alanyl-[protein] + CoA + H(+). It carries out the reaction N-terminal L-seryl-[protein] + acetyl-CoA = N-terminal N(alpha)-acetyl-L-seryl-[protein] + CoA + H(+). It catalyses the reaction N-terminal L-valyl-[protein] + acetyl-CoA = N-terminal N(alpha)-acetyl-L-valyl-[protein] + CoA + H(+). The catalysed reaction is N-terminal L-cysteinyl-[protein] + acetyl-CoA = N-terminal N(alpha)-acetyl-L-cysteinyl-[protein] + CoA + H(+). The enzyme catalyses N-terminal L-threonyl-[protein] + acetyl-CoA = N-terminal N(alpha)-acetyl-L-threonyl-[protein] + CoA + H(+). In terms of biological role, N-alpha-acetyltransferase that specifically mediates the acetylation of N-terminal residues. Able to mediate acetylation of a wide variety of N-terminal residues, with preference for hydrophobic N-termini. Acetylates GroS/GroES and GroEL1. Able to acetylate the ribosomal protein bS18, but it is unclear whether it acetylates its N-terminal alanine residue. The sequence is that of N-alpha-acetyltransferase RimI from Mycobacterium tuberculosis (strain ATCC 25618 / H37Rv).